Consider the following 210-residue polypeptide: Pyridoxine/pyridoxamine 5'-phosphate oxidase (210 aa).

Substrate is bound by residues 7–10 and Lys65; that span reads REDY. FMN-binding positions include 60-65, 75-76, Arg81, Lys82, and Gln104; these read RMVLLK and FT. Tyr122, Arg126, and Ser130 together coordinate substrate. FMN-binding positions include 139 to 140 and Trp183; that span reads QS. 189 to 191 contributes to the substrate binding site; sequence RLH. Arg193 is a binding site for FMN.

Belongs to the pyridoxamine 5'-phosphate oxidase family. As to quaternary structure, homodimer. Requires FMN as cofactor.

The enzyme catalyses pyridoxamine 5'-phosphate + O2 + H2O = pyridoxal 5'-phosphate + H2O2 + NH4(+). The catalysed reaction is pyridoxine 5'-phosphate + O2 = pyridoxal 5'-phosphate + H2O2. It functions in the pathway cofactor metabolism; pyridoxal 5'-phosphate salvage; pyridoxal 5'-phosphate from pyridoxamine 5'-phosphate: step 1/1. Its pathway is cofactor metabolism; pyridoxal 5'-phosphate salvage; pyridoxal 5'-phosphate from pyridoxine 5'-phosphate: step 1/1. Its function is as follows. Catalyzes the oxidation of either pyridoxine 5'-phosphate (PNP) or pyridoxamine 5'-phosphate (PMP) into pyridoxal 5'-phosphate (PLP). The protein is Pyridoxine/pyridoxamine 5'-phosphate oxidase of Neisseria meningitidis serogroup B (strain ATCC BAA-335 / MC58).